A 324-amino-acid chain; its full sequence is Porphobilinogen deaminase 1 (324 aa).

Cysteine 249 is subject to S-(dipyrrolylmethanemethyl)cysteine.

Belongs to the HMBS family. In terms of assembly, monomer. The cofactor is dipyrromethane.

The catalysed reaction is 4 porphobilinogen + H2O = hydroxymethylbilane + 4 NH4(+). It participates in porphyrin-containing compound metabolism; protoporphyrin-IX biosynthesis; coproporphyrinogen-III from 5-aminolevulinate: step 2/4. Tetrapolymerization of the monopyrrole PBG into the hydroxymethylbilane pre-uroporphyrinogen in several discrete steps. The polypeptide is Porphobilinogen deaminase 1 (hemC1) (Streptomyces avermitilis (strain ATCC 31267 / DSM 46492 / JCM 5070 / NBRC 14893 / NCIMB 12804 / NRRL 8165 / MA-4680)).